The following is a 465-amino-acid chain: Chromosomal replication initiator protein DnaA (465 aa).

Residues 1–84 (MSLSLWQQCL…RFEVGSKPLV (84 aa)) form a domain I, interacts with DnaA modulators region. Residues 84–128 (VQAISQPAQPHHKQVSAAPQQQVRSAPVRPSWDNSPAQAEHTYRS) are domain II. The interval 91–120 (AQPHHKQVSAAPQQQVRSAPVRPSWDNSPA) is disordered. The domain III, AAA+ region stretch occupies residues 129 to 345 (NVNPKHTFDN…GALNRVIANA (217 aa)). Residues G173, G175, K176, and T177 each coordinate ATP. A domain IV, binds dsDNA region spans residues 346–465 (NFTGRSITID…FSNLIRTLSS (120 aa)).

Belongs to the DnaA family. Oligomerizes as a right-handed, spiral filament on DNA at oriC.

Its subcellular location is the cytoplasm. Its function is as follows. Plays an essential role in the initiation and regulation of chromosomal replication. ATP-DnaA binds to the origin of replication (oriC) to initiate formation of the DNA replication initiation complex once per cell cycle. Binds the DnaA box (a 9 base pair repeat at the origin) and separates the double-stranded (ds)DNA. Forms a right-handed helical filament on oriC DNA; dsDNA binds to the exterior of the filament while single-stranded (ss)DNA is stabiized in the filament's interior. The ATP-DnaA-oriC complex binds and stabilizes one strand of the AT-rich DNA unwinding element (DUE), permitting loading of DNA polymerase. After initiation quickly degrades to an ADP-DnaA complex that is not apt for DNA replication. Binds acidic phospholipids. The sequence is that of Chromosomal replication initiator protein DnaA from Pectobacterium carotovorum subsp. carotovorum (strain PC1).